A 1347-amino-acid chain; its full sequence is Spermatogenesis-associated protein 31A1 (1347 aa).

A helical membrane pass occupies residues 23–43; that stretch reads PWVLDIFLTLVFALGFFFLLL. Disordered regions lie at residues 55–89, 106–235, 373–397, 628–658, 899–955, and 1085–1160; these read PSPS…ECPR, GPHL…STLI, EQDT…GPQK, DESP…EAQK, PRGI…REAV, and HEEP…PPSV. Residues 60–82 show a composition bias toward basic residues; it reads GKRKCPVGRRRRPRGRMKNHSLR. Over residues 165–178 the composition is skewed to polar residues; that stretch reads LASTPSPGPMTTSV. The segment covering 198–222 has biased composition (pro residues); that stretch reads PEPPALFPHPPHTPDPLACSPPPPK. Composition is skewed to polar residues over residues 631 to 651 and 927 to 948; these read PGTS…STGE and LTYS…SSKA. Basic and acidic residues-rich tracts occupy residues 1108–1127 and 1137–1146; these read HKSE…RLEG and RKTEDTHQDE.

Belongs to the SPATA31 family.

It is found in the membrane. May play a role in spermatogenesis. The sequence is that of Spermatogenesis-associated protein 31A1 from Homo sapiens (Human).